The sequence spans 139 residues: NADH-quinone oxidoreductase subunit A (139 aa).

The next 3 helical transmembrane spans lie at 11–31, 70–90, and 97–117; these read LWPL…MLAL, LIAI…AWAI, and WPGY…LVYL.

It belongs to the complex I subunit 3 family. As to quaternary structure, NDH-1 is composed of 14 different subunits. Subunits NuoA, H, J, K, L, M, N constitute the membrane sector of the complex.

The protein resides in the cell inner membrane. The catalysed reaction is a quinone + NADH + 5 H(+)(in) = a quinol + NAD(+) + 4 H(+)(out). NDH-1 shuttles electrons from NADH, via FMN and iron-sulfur (Fe-S) centers, to quinones in the respiratory chain. The immediate electron acceptor for the enzyme in this species is believed to be ubiquinone. Couples the redox reaction to proton translocation (for every two electrons transferred, four hydrogen ions are translocated across the cytoplasmic membrane), and thus conserves the redox energy in a proton gradient. This chain is NADH-quinone oxidoreductase subunit A, found in Methylococcus capsulatus (strain ATCC 33009 / NCIMB 11132 / Bath).